The following is a 476-amino-acid chain: Small ribosomal subunit protein mS29 (476 aa).

Residues 1 to 54 (MLPKFRSRSSIIKNTERISNILSGGKLTVCGSKLGGLYTFEKCTFNKYYSSSQY) constitute a mitochondrion transit peptide. Residues 58 to 97 (GRPVGGNIHSSSNQQRQKNSEAPRINEIPPSTSSVEKSTT) form a disordered region. 2 stretches are compositionally biased toward polar residues: residues 65-74 (IHSSSNQQRQ) and 86-97 (PPSTSSVEKSTT). 200–207 (GAPGSGRS) contributes to the ATP binding site.

It belongs to the mitochondrion-specific ribosomal protein mS29 family. Component of the mitochondrial small ribosomal subunit (mt-SSU). Mature yeast 74S mitochondrial ribosomes consist of a small (37S) and a large (54S) subunit. The 37S small subunit contains a 15S ribosomal RNA (15S mt-rRNA) and at least 32 different proteins. The 54S large subunit contains a 21S rRNA (21S mt-rRNA) and at least 45 different proteins.

It localises to the mitochondrion. In terms of biological role, component of the mitochondrial ribosome (mitoribosome), a dedicated translation machinery responsible for the synthesis of mitochondrial genome-encoded proteins, including at least some of the essential transmembrane subunits of the mitochondrial respiratory chain. The mitoribosomes are attached to the mitochondrial inner membrane and translation products are cotranslationally integrated into the membrane. mS29 binds GTP and is probably an active GTPase. GTP hydrolysis may be linked to subunit association. mS29 also has an extraribosomal function, being required for maintenance of mitochondrial DNA. The sequence is that of Small ribosomal subunit protein mS29 (rsm23) from Schizosaccharomyces pombe (strain 972 / ATCC 24843) (Fission yeast).